A 607-amino-acid polypeptide reads, in one-letter code: Aspartate--tRNA(Asp/Asn) ligase (607 aa).

E194 is an L-aspartate binding site. The segment at 218-221 is aspartate; the sequence is QLFK. R240 provides a ligand contact to L-aspartate. Residues 240–242 and Q249 each bind ATP; that span reads RDE. H468 lines the L-aspartate pocket. Residue E502 participates in ATP binding. Position 509 (R509) interacts with L-aspartate. 554–557 provides a ligand contact to ATP; it reads GLDR.

The protein belongs to the class-II aminoacyl-tRNA synthetase family. Type 1 subfamily. Homodimer.

Its subcellular location is the cytoplasm. The catalysed reaction is tRNA(Asx) + L-aspartate + ATP = L-aspartyl-tRNA(Asx) + AMP + diphosphate. Its function is as follows. Aspartyl-tRNA synthetase with relaxed tRNA specificity since it is able to aspartylate not only its cognate tRNA(Asp) but also tRNA(Asn). Reaction proceeds in two steps: L-aspartate is first activated by ATP to form Asp-AMP and then transferred to the acceptor end of tRNA(Asp/Asn). The protein is Aspartate--tRNA(Asp/Asn) ligase of Desulfotalea psychrophila (strain LSv54 / DSM 12343).